Here is a 141-residue protein sequence, read N- to C-terminus: Nucleoside diphosphate kinase (141 aa).

The ATP site is built by Lys11, Phe59, Arg87, Thr93, Arg104, and Asn114. Residue His117 is the Pros-phosphohistidine intermediate of the active site.

It belongs to the NDK family. In terms of assembly, homotetramer. Requires Mg(2+) as cofactor.

The protein localises to the cytoplasm. The enzyme catalyses a 2'-deoxyribonucleoside 5'-diphosphate + ATP = a 2'-deoxyribonucleoside 5'-triphosphate + ADP. The catalysed reaction is a ribonucleoside 5'-diphosphate + ATP = a ribonucleoside 5'-triphosphate + ADP. Its function is as follows. Major role in the synthesis of nucleoside triphosphates other than ATP. The ATP gamma phosphate is transferred to the NDP beta phosphate via a ping-pong mechanism, using a phosphorylated active-site intermediate. The chain is Nucleoside diphosphate kinase from Yersinia enterocolitica serotype O:8 / biotype 1B (strain NCTC 13174 / 8081).